The chain runs to 72 residues: Cell division protein ZapB (72 aa).

Residues 3–71 (LSIIDQLEEK…LRSLLGQIDN (69 aa)) adopt a coiled-coil conformation.

This sequence belongs to the ZapB family. In terms of assembly, homodimer. The ends of the coiled-coil dimer bind to each other, forming polymers. Interacts with FtsZ.

Its subcellular location is the cytoplasm. Its function is as follows. Non-essential, abundant cell division factor that is required for proper Z-ring formation. It is recruited early to the divisome by direct interaction with FtsZ, stimulating Z-ring assembly and thereby promoting cell division earlier in the cell cycle. Its recruitment to the Z-ring requires functional FtsA or ZipA. The chain is Cell division protein ZapB from Haemophilus ducreyi (strain 35000HP / ATCC 700724).